The primary structure comprises 332 residues: Beta-ketoacyl-[acyl-carrier-protein] synthase III (332 aa).

Active-site residues include cysteine 114 and histidine 255. The tract at residues glutamine 256 to arginine 260 is ACP-binding. Asparagine 285 is a catalytic residue.

Belongs to the thiolase-like superfamily. FabH family. Homodimer.

It is found in the cytoplasm. The catalysed reaction is malonyl-[ACP] + acetyl-CoA + H(+) = 3-oxobutanoyl-[ACP] + CO2 + CoA. The protein operates within lipid metabolism; fatty acid biosynthesis. Catalyzes the condensation reaction of fatty acid synthesis by the addition to an acyl acceptor of two carbons from malonyl-ACP. Catalyzes the first condensation reaction which initiates fatty acid synthesis and may therefore play a role in governing the total rate of fatty acid production. Possesses both acetoacetyl-ACP synthase and acetyl transacylase activities. Its substrate specificity determines the biosynthesis of branched-chain and/or straight-chain of fatty acids. This Sulfurimonas denitrificans (strain ATCC 33889 / DSM 1251) (Thiomicrospira denitrificans (strain ATCC 33889 / DSM 1251)) protein is Beta-ketoacyl-[acyl-carrier-protein] synthase III.